A 232-amino-acid chain; its full sequence is MSLIESIRKQVTPIHPEGYVFIASFGVATLVLGSFFSPLGWIGAFATAWCAYFFRDPVRQTPLDEGLVISPADGVISAVGFFPPPPELGLGVEPLQRISVFMSVFDCHVNRAPVAGRIVKIAYKPGLFLNADLDKASEDNERNGLVIETAAGRFGVVQIAGLVARRIVCFVRQGESIGVGDRIGLIRFGSRVDVYLPGTARALVTVGSKAVAGETVLAELRAGANRRAFKSS.

Serine 190 (schiff-base intermediate with substrate; via pyruvic acid) is an active-site residue. Serine 190 bears the Pyruvic acid (Ser); by autocatalysis mark.

The protein belongs to the phosphatidylserine decarboxylase family. PSD-A subfamily. As to quaternary structure, heterodimer of a large membrane-associated beta subunit and a small pyruvoyl-containing alpha subunit. Requires pyruvate as cofactor. In terms of processing, is synthesized initially as an inactive proenzyme. Formation of the active enzyme involves a self-maturation process in which the active site pyruvoyl group is generated from an internal serine residue via an autocatalytic post-translational modification. Two non-identical subunits are generated from the proenzyme in this reaction, and the pyruvate is formed at the N-terminus of the alpha chain, which is derived from the carboxyl end of the proenzyme. The post-translation cleavage follows an unusual pathway, termed non-hydrolytic serinolysis, in which the side chain hydroxyl group of the serine supplies its oxygen atom to form the C-terminus of the beta chain, while the remainder of the serine residue undergoes an oxidative deamination to produce ammonia and the pyruvoyl prosthetic group on the alpha chain.

It is found in the cell membrane. The enzyme catalyses a 1,2-diacyl-sn-glycero-3-phospho-L-serine + H(+) = a 1,2-diacyl-sn-glycero-3-phosphoethanolamine + CO2. It functions in the pathway phospholipid metabolism; phosphatidylethanolamine biosynthesis; phosphatidylethanolamine from CDP-diacylglycerol: step 2/2. Its function is as follows. Catalyzes the formation of phosphatidylethanolamine (PtdEtn) from phosphatidylserine (PtdSer). The sequence is that of Phosphatidylserine decarboxylase proenzyme from Methylocella silvestris (strain DSM 15510 / CIP 108128 / LMG 27833 / NCIMB 13906 / BL2).